We begin with the raw amino-acid sequence, 516 residues long: MTDWTERYRPTTLSAVRGNNAARDEFIEWAESWDDHHESVVLHGAPGVGKTSAAHALASDMGWETVELNASDQRTSDVIERLAGRAAKNATLAGAVSGTTSTRQLIIMDEADNIHYQYDRGGKQAVTTLLKDANQPIVLIANEYYDMSRGLRNAAQDIEFRDISARSIVPVLRNILRKENIEFEEAALKQIAEVNSGDLRAAIKDLQTTVEGSDRITVDDVKTGGRDRAMGLFSFLDSVLKEDAAEEALQNSYDVDETPDDLLKWVEDKVPLVYDDAELARAYEFLSNADIWTNRVYATDYNYRWWRYATDNLAGGVAAARETQRGGWTRYGGAPYRSTRDSTRDTVVREVAKTGGFSMATARTAVIPFLSAITHLCKPRSLTVGMAAWYELDEAGVSYITGSGETTKKVASIVEDAAERRSEAVEAHAGSAFAETETEEKTNFTGNQDSDVDVQSHKSAESGDDTVRTANTPAEDHAQSGASETASATESASDSDASTDTDADDDDGQAGLSEFM.

44–51 (GAPGVGKT) contributes to the ATP binding site. Residues 421–516 (RSEAVEAHAG…DGQAGLSEFM (96 aa)) are disordered. Positions 454 to 467 (VQSHKSAESGDDTV) are enriched in basic and acidic residues. The span at 479 to 496 (QSGASETASATESASDSD) shows a compositional bias: low complexity. Acidic residues predominate over residues 497–508 (ASTDTDADDDDG).

It belongs to the activator 1 small subunits family. RfcL subfamily. Heteromultimer composed of small subunits (RfcS) and large subunits (RfcL).

In terms of biological role, part of the RFC clamp loader complex which loads the PCNA sliding clamp onto DNA. This Haloquadratum walsbyi (strain DSM 16790 / HBSQ001) protein is Replication factor C large subunit.